Here is a 130-residue protein sequence, read N- to C-terminus: Small ribosomal subunit protein uS8 (130 aa).

The protein belongs to the universal ribosomal protein uS8 family. In terms of assembly, part of the 30S ribosomal subunit. Contacts proteins S5 and S12.

Functionally, one of the primary rRNA binding proteins, it binds directly to 16S rRNA central domain where it helps coordinate assembly of the platform of the 30S subunit. This is Small ribosomal subunit protein uS8 from Photorhabdus laumondii subsp. laumondii (strain DSM 15139 / CIP 105565 / TT01) (Photorhabdus luminescens subsp. laumondii).